The following is a 329-amino-acid chain: Biotin synthase (329 aa).

The Radical SAM core domain occupies 38-262 (NTIQVSTLLS…IMPYSYIRLS (225 aa)). 3 residues coordinate [4Fe-4S] cluster: Cys53, Cys57, and Cys60. The [2Fe-2S] cluster site is built by Cys97, Cys128, Cys188, and Arg260.

Belongs to the radical SAM superfamily. Biotin synthase family. Homodimer. [4Fe-4S] cluster is required as a cofactor. Requires [2Fe-2S] cluster as cofactor.

The enzyme catalyses (4R,5S)-dethiobiotin + (sulfur carrier)-SH + 2 reduced [2Fe-2S]-[ferredoxin] + 2 S-adenosyl-L-methionine = (sulfur carrier)-H + biotin + 2 5'-deoxyadenosine + 2 L-methionine + 2 oxidized [2Fe-2S]-[ferredoxin]. Its pathway is cofactor biosynthesis; biotin biosynthesis; biotin from 7,8-diaminononanoate: step 2/2. In terms of biological role, catalyzes the conversion of dethiobiotin (DTB) to biotin by the insertion of a sulfur atom into dethiobiotin via a radical-based mechanism. This Acinetobacter baylyi (strain ATCC 33305 / BD413 / ADP1) protein is Biotin synthase.